Consider the following 226-residue polypeptide: Cytidylate kinase (226 aa).

Residue 11 to 19 coordinates ATP; it reads GPASAGKST.

It belongs to the cytidylate kinase family. Type 1 subfamily.

Its subcellular location is the cytoplasm. The catalysed reaction is CMP + ATP = CDP + ADP. It carries out the reaction dCMP + ATP = dCDP + ADP. The polypeptide is Cytidylate kinase (Limosilactobacillus fermentum (strain NBRC 3956 / LMG 18251) (Lactobacillus fermentum)).